Consider the following 3218-residue polypeptide: Serine/threonine-protein kinase Smg1 (3218 aa).

The disordered stretch occupies residues 32–78 (LNNNGNHGDSSNEGGGGNGSGRGGATGSGNIAGLGGSESMWSPGGGK). A compositionally biased stretch (low complexity) spans 33–43 (NNNGNHGDSSN). Gly residues predominate over residues 44–67 (EGGGGNGSGRGGATGSGNIAGLGG). At Ser70 the chain carries Phosphoserine. An FAT domain is found at 1289–1692 (DAAAAAREEG…IFPAVVGANR (404 aa)). One copy of the HEAT repeat lies at 1643–1678 (APWKVIIPQLFSRLNHHEPYVRKSVCDLLCRLAKSR). Residues 1897–2232 (VESSVCVLPT…LGVGDLKYHK (336 aa)) enclose the PI3K/PI4K catalytic domain. The G-loop stretch occupies residues 1903–1909 (VLPTKTK). Residues 2101–2109 (GLGDRHLDN) are catalytic loop. The segment at 2121-2145 (HIDYNVCFEKGRTLRIPEKVPFRLT) is activation loop. Residues 3186-3218 (QRSTVAEQVDYVIREACNPENLAVLYEGWTPWV) enclose the FATC domain.

Belongs to the PI3/PI4-kinase family. As to quaternary structure, component of a post-splicing multiprotein NMD complex. Mn(2+) serves as cofactor.

The protein localises to the cytoplasm. It catalyses the reaction L-seryl-[protein] + ATP = O-phospho-L-seryl-[protein] + ADP + H(+). The enzyme catalyses L-threonyl-[protein] + ATP = O-phospho-L-threonyl-[protein] + ADP + H(+). Serine/threonine protein kinase involved in mRNA surveillance. Recognizes the substrate consensus sequence [ST]-Q. Involved in nonsense-mediated decay (NMD) of mRNAs containing premature stop codons, probably by phosphorylating Upf1. In Drosophila melanogaster (Fruit fly), this protein is Serine/threonine-protein kinase Smg1 (nonC).